Reading from the N-terminus, the 978-residue chain is Sensor histidine kinase TodS (978 aa).

Residues 32 to 103 (CEEHARIIFD…TQKRLVETAS (72 aa)) enclose the PAS 1 domain. Positions 108–162 (VRCDVEILGKSGGREVIAVDFSLLPICNEEGSIVYLLAEGRNITDKKKAEAMLAL) constitute a PAC 1 domain. A Histidine kinase 1 domain is found at 187 to 405 (KVSHELRTPL…LFQVKLPLNA (219 aa)). Residue His-190 is modified to Phosphohistidine; by autocatalysis. One can recognise a Response regulatory domain in the interval 452-567 (RVLIVEDNPD…ELRARVSNLV (116 aa)). Asp-500 is subject to 4-aspartylphosphate. The PAS 2 domain occupies 611-681 (SEARWKAVYE…QRLANLLQGG (71 aa)). The region spanning 685-737 (YSVERSYLCKNGSTIWANASVSLMPQRVGESPVILQIIDDITEKKQAQENLNQ) is the PAC 2 domain. The region spanning 757–974 (YIAHEINQPL…CFLVSIPARQ (218 aa)) is the Histidine kinase 2 domain. Position 760 is a phosphohistidine (His-760).

Post-translationally, autophosphorylated. Activation requires a sequential transfer of a phosphate group from a His in the primary transmitter domain, to an Asp in the receiver domain and to a His in the secondary transmitter domain.

The protein resides in the cytoplasm. The enzyme catalyses ATP + protein L-histidine = ADP + protein N-phospho-L-histidine.. Activity is regulated by agonists and antagonists. Binding of agonists such as toluene or benzene to TodS stimulates autophosphorylation at His-190. Activity is inhibited by antagonists such as o-xylene, o-chlorotoluene and trimethylbenzene isomers, which bind to TodS but do not stimulate autophosphorylation. Agonists and antagonists bind to the same PAS domain. In terms of biological role, member of the two-component regulatory system TodS/TodT involved in the regulation of toluene degradation. Phosphorylates TodT via a four-step phosphorelay in response to toluene. Can also be induced by benzene and ethylbenzene. The protein is Sensor histidine kinase TodS (todS) of Pseudomonas putida (strain DOT-T1E).